We begin with the raw amino-acid sequence, 765 residues long: Protein BCH2 (765 aa).

Positions Met-1–Arg-31 are disordered. The CHS5-binding stretch occupies residues Leu-735–Asp-765.

The protein belongs to the CHAPS family. As to quaternary structure, component of the CHS5/6 complex composed of the 4 CHAPS proteins BCH1, BCH2, BUD7, and CHS6 as well as at least CHS5 and GTP-bound ARF1. The complex interacts with the cargo protein CHS3.

It localises to the golgi apparatus. The protein localises to the trans-Golgi network membrane. In terms of biological role, member of the CHS5-ARF1P-binding proteins (CHAPS) which mediates export of specific cargo proteins, including chitin synthase CHS3. This is Protein BCH2 (BCH2) from Saccharomyces cerevisiae (strain ATCC 204508 / S288c) (Baker's yeast).